A 224-amino-acid chain; its full sequence is 7-cyano-7-deazaguanine synthase (224 aa).

Position 8-18 (8-18 (LSGGMDSAAVI)) interacts with ATP. Residues C186, C196, C199, and C202 each coordinate Zn(2+).

This sequence belongs to the QueC family. Zn(2+) serves as cofactor.

The enzyme catalyses 7-carboxy-7-deazaguanine + NH4(+) + ATP = 7-cyano-7-deazaguanine + ADP + phosphate + H2O + H(+). It participates in purine metabolism; 7-cyano-7-deazaguanine biosynthesis. Functionally, catalyzes the ATP-dependent conversion of 7-carboxy-7-deazaguanine (CDG) to 7-cyano-7-deazaguanine (preQ(0)). In Xanthomonas campestris pv. campestris (strain 8004), this protein is 7-cyano-7-deazaguanine synthase.